We begin with the raw amino-acid sequence, 578 residues long: Arginine--tRNA ligase (578 aa).

The short motif at 122 to 132 (PNLAKEMHVGH) is the 'HIGH' region element.

The protein belongs to the class-I aminoacyl-tRNA synthetase family. As to quaternary structure, monomer.

The protein resides in the cytoplasm. It carries out the reaction tRNA(Arg) + L-arginine + ATP = L-arginyl-tRNA(Arg) + AMP + diphosphate. The chain is Arginine--tRNA ligase from Pseudoalteromonas atlantica (strain T6c / ATCC BAA-1087).